A 634-amino-acid polypeptide reads, in one-letter code: MYDLLKTIDDPADLRRLDRRQLQPLADELRAFVLDSVSKTGGHLSSNLGTVELTIALHYVFNTPDDRIVWDVGHQTYPHKILTGRRDGMKTLRQFDGISGFPRRSESEYDTFGTAHSSTSISAALGMAIGSKLNGDDRFSIAVIGDGAMTAGMAFEAMNNAGVSEDAKLLVILNDNDMSISPPVGALNRHLARLMSGRFYAAARAGVERVLSVAPPVLELARKLEEHAKGMVVPATLFEEFGFNYIGPIDGHDLDSLIPTLQNIKELRGPQFLHVVTKKGQGYKLAEADPVLYHGPGKFNPAEGIKPSATPAKKTYTQVFGEWLCDAAELDARVVGITPAMREGSGMVEFEKRFPERYYDVGIAEQHAVTFAGGLATEGLKPVVAIYSTFLQRAYDQLIHDVALQNLPVVFAIDRAGLVGADGATHAGAYDLAFLRCIPNMTVMAASDENECRQMLHTALQQPNPTAVRYPRGAGTGVATVKAFTEIPLGKGEVRRRTSQPDGKRVAILAFGTMVAPSLAAADALDATVANMRFVKPIDAELVRELAQTHDYLVTVEEGCVMGGAGSACVEAMMEGGAVRPVLQLGLPDRFVDHGDPAKLLAMCGLDGDGIAKSIRERFLNHAANVASPAKRVA.

Thiamine diphosphate is bound by residues H74 and A115–S117. Residue D146 participates in Mg(2+) binding. Thiamine diphosphate-binding positions include G147 to A148, N176, Y283, and E365. Residue N176 coordinates Mg(2+).

The protein belongs to the transketolase family. DXPS subfamily. As to quaternary structure, homodimer. Mg(2+) is required as a cofactor. The cofactor is thiamine diphosphate.

The enzyme catalyses D-glyceraldehyde 3-phosphate + pyruvate + H(+) = 1-deoxy-D-xylulose 5-phosphate + CO2. Its pathway is metabolic intermediate biosynthesis; 1-deoxy-D-xylulose 5-phosphate biosynthesis; 1-deoxy-D-xylulose 5-phosphate from D-glyceraldehyde 3-phosphate and pyruvate: step 1/1. Its function is as follows. Catalyzes the acyloin condensation reaction between C atoms 2 and 3 of pyruvate and glyceraldehyde 3-phosphate to yield 1-deoxy-D-xylulose-5-phosphate (DXP). In Burkholderia thailandensis (strain ATCC 700388 / DSM 13276 / CCUG 48851 / CIP 106301 / E264), this protein is 1-deoxy-D-xylulose-5-phosphate synthase.